Consider the following 172-residue polypeptide: 2S seed storage-like protein (172 aa).

Residues 1-35 (MGVFSPSTTRLTLKWFSLSVALFLLFHWGIPSVDG) form the signal peptide. A disordered region spans residues 108–172 (FMDSDSQEDA…RYSMTGSSFK (65 aa)). The span at 151-160 (EPPRRCDIQR) shows a compositional bias: basic and acidic residues.

This sequence belongs to the 2S seed storage albumins family.

This chain is 2S seed storage-like protein, found in Picea glauca (White spruce).